Consider the following 135-residue polypeptide: Transcription antitermination protein NusB (135 aa).

Belongs to the NusB family.

In terms of biological role, involved in transcription antitermination. Required for transcription of ribosomal RNA (rRNA) genes. Binds specifically to the boxA antiterminator sequence of the ribosomal RNA (rrn) operons. This is Transcription antitermination protein NusB from Bdellovibrio bacteriovorus (strain ATCC 15356 / DSM 50701 / NCIMB 9529 / HD100).